We begin with the raw amino-acid sequence, 130 residues long: MARVTVEDCIDKVDNRFDLVLLAAHRARMISSGSPITVDRDNDKNPVVSLREIADQTIAPEDLKEELVHSLQKFVEVDEPEPDTIPLIGSAGASVDADDTEVAVERMTEEELLKGLEGLAPPEEQPEEEE.

The disordered stretch occupies residues 110-130 (EELLKGLEGLAPPEEQPEEEE).

It belongs to the RNA polymerase subunit omega family. In terms of assembly, the RNAP catalytic core consists of 2 alpha, 1 beta, 1 beta' and 1 omega subunit. When a sigma factor is associated with the core the holoenzyme is formed, which can initiate transcription.

It catalyses the reaction RNA(n) + a ribonucleoside 5'-triphosphate = RNA(n+1) + diphosphate. Its function is as follows. Promotes RNA polymerase assembly. Latches the N- and C-terminal regions of the beta' subunit thereby facilitating its interaction with the beta and alpha subunits. The protein is DNA-directed RNA polymerase subunit omega of Afipia carboxidovorans (strain ATCC 49405 / DSM 1227 / KCTC 32145 / OM5) (Oligotropha carboxidovorans).